Reading from the N-terminus, the 197-residue chain is Transposon Tn10 TetC protein (197 aa).

The 61-residue stretch at 12-72 (KSTYQSLVNS…ACYKQQLIMI (61 aa)) folds into the HTH tetR-type domain. A DNA-binding region (H-T-H motif) is located at residues 35–54 (SIDEISGKALVTKGAFYHHF).

In Escherichia coli, this protein is Transposon Tn10 TetC protein (tetC).